The following is a 429-amino-acid chain: Glutamate-1-semialdehyde 2,1-aminomutase 1 (429 aa).

N6-(pyridoxal phosphate)lysine is present on Lys-267.

The protein belongs to the class-III pyridoxal-phosphate-dependent aminotransferase family. HemL subfamily. As to quaternary structure, homodimer. Pyridoxal 5'-phosphate is required as a cofactor.

The protein localises to the cytoplasm. It carries out the reaction (S)-4-amino-5-oxopentanoate = 5-aminolevulinate. Its pathway is porphyrin-containing compound metabolism; protoporphyrin-IX biosynthesis; 5-aminolevulinate from L-glutamyl-tRNA(Glu): step 2/2. This is Glutamate-1-semialdehyde 2,1-aminomutase 1 from Bacillus velezensis (strain DSM 23117 / BGSC 10A6 / LMG 26770 / FZB42) (Bacillus amyloliquefaciens subsp. plantarum).